The chain runs to 411 residues: Serine--tRNA ligase (411 aa).

T226 to E228 contributes to the L-serine binding site. Position 257–259 (R257–E259) interacts with ATP. Residue E280 participates in L-serine binding. E344 to S347 contributes to the ATP binding site. Position 379 (S379) interacts with L-serine.

Belongs to the class-II aminoacyl-tRNA synthetase family. Type-1 seryl-tRNA synthetase subfamily. As to quaternary structure, homodimer. The tRNA molecule binds across the dimer.

Its subcellular location is the cytoplasm. It carries out the reaction tRNA(Ser) + L-serine + ATP = L-seryl-tRNA(Ser) + AMP + diphosphate + H(+). The catalysed reaction is tRNA(Sec) + L-serine + ATP = L-seryl-tRNA(Sec) + AMP + diphosphate + H(+). Its pathway is aminoacyl-tRNA biosynthesis; selenocysteinyl-tRNA(Sec) biosynthesis; L-seryl-tRNA(Sec) from L-serine and tRNA(Sec): step 1/1. Catalyzes the attachment of serine to tRNA(Ser). Is also able to aminoacylate tRNA(Sec) with serine, to form the misacylated tRNA L-seryl-tRNA(Sec), which will be further converted into selenocysteinyl-tRNA(Sec). The polypeptide is Serine--tRNA ligase (Campylobacter lari (strain RM2100 / D67 / ATCC BAA-1060)).